The chain runs to 237 residues: UPF0174 protein YaaW (237 aa).

It belongs to the UPF0174 family.

The sequence is that of UPF0174 protein YaaW (yaaW) from Escherichia coli (strain K12).